A 377-amino-acid polypeptide reads, in one-letter code: Nitric oxide reductase FlRd-NAD(+) reductase (377 aa).

Belongs to the FAD-dependent oxidoreductase family. FAD is required as a cofactor.

The protein resides in the cytoplasm. The catalysed reaction is 2 reduced [nitric oxide reductase rubredoxin domain] + NAD(+) + H(+) = 2 oxidized [nitric oxide reductase rubredoxin domain] + NADH. Its pathway is nitrogen metabolism; nitric oxide reduction. Its function is as follows. One of at least two accessory proteins for anaerobic nitric oxide (NO) reductase. Reduces the rubredoxin moiety of NO reductase. In Salmonella paratyphi A (strain AKU_12601), this protein is Nitric oxide reductase FlRd-NAD(+) reductase.